A 309-amino-acid polypeptide reads, in one-letter code: Mitochondrial fission regulator 1-like (309 aa).

Residues 189 to 221 (DVTEEDEEEEEEEDREEEEEDVSELVPDPMPPV) form a disordered region. Residues 190–211 (VTEEDEEEEEEEDREEEEEDVS) are compositionally biased toward acidic residues. Ser253 is modified (phosphoserine).

The protein belongs to the MTFR1 family.

It localises to the mitochondrion outer membrane. Its function is as follows. Mitochondrial protein required for adaptation of miochondrial dynamics to metabolic changes. Regulates mitochondrial morphology at steady state and mediates AMPK-dependent stress-induced mitochondrial fragmentation via the control of OPA1 levels. In Danio rerio (Zebrafish), this protein is Mitochondrial fission regulator 1-like (mtfr1l).